Here is a 1604-residue protein sequence, read N- to C-terminus: Metabotropic glutamate receptor-like protein R (1604 aa).

The N-terminal stretch at 1 to 27 (MVIKKPFIFIFICFLICLLICIDLTNC) is a signal peptide. Residues 28–1149 (NTINNNNNNN…TDVSKTKIAK (1122 aa)) are Extracellular-facing. A compositionally biased stretch (low complexity) spans 38-69 (NNNNNNNNNNNNNNNNNNNNNNNNNNNNNNDN). The segment at 38-72 (NNNNNNNNNNNNNNNNNNNNNNNNNNNNNNDNNEN) is disordered. Residues 98-133 (DFYINKIKKEIKDREKYKNNIENEILKINSQKKRKK) are a coiled coil. A disordered region spans residues 213–263 (NNNNNNNNNNNNNNNNNNKNNNNNNNNKNNNNNNNNKNNNNNNNNKNNNKN). Residues asparagine 285, asparagine 327, asparagine 359, asparagine 375, asparagine 489, asparagine 498, asparagine 525, asparagine 577, asparagine 593, asparagine 624, asparagine 768, asparagine 837, asparagine 841, asparagine 851, asparagine 864, asparagine 876, asparagine 885, asparagine 888, asparagine 913, asparagine 967, asparagine 991, asparagine 1097, and asparagine 1109 are each glycosylated (N-linked (GlcNAc...) asparagine). The chain crosses the membrane as a helical span at residues 1150-1170 (IIIGISAIIVSIGVLITAILT). Residues 1171–1184 (FIYRKRKIMRYSNP) are Cytoplasmic-facing. A helical membrane pass occupies residues 1185 to 1205 (VFLLIILVGCVCGLVSTFVSF). The Extracellular portion of the chain corresponds to 1206-1211 (STTSAT). The chain crosses the membrane as a helical span at residues 1212–1232 (CSIRMVLIPLFFFIITSAIFI). Residues 1233-1256 (KQYRVYCLIRGVEELHDMSIENSY) lie on the Cytoplasmic side of the membrane. A helical transmembrane segment spans residues 1257 to 1277 (LLKLQSFILIIPAILIAVSVI). Over 1278–1304 (ATRMHRKYNFDLQKETIQAYCYSKNFY) the chain is Extracellular. Residues 1305-1325 (IIFICLALYEFSILLYGCWIV) form a helical membrane-spanning segment. The Cytoplasmic portion of the chain corresponds to 1326-1340 (IKCRQYRSFPGSFNE). Residues 1341–1361 (FFYIGVLIYVLTVILVVSIPI) traverse the membrane as a helical segment. Topologically, residues 1362 to 1372 (GFALLNSALTD) are extracellular. A helical membrane pass occupies residues 1373 to 1393 (FLLYSIPILVLIVAIIGLLFA). Over 1394–1604 (PKFYFLFRTD…KSSQNSPLLD (211 aa)) the chain is Cytoplasmic. The tract at residues 1457–1604 (TGSNTSDDVS…KSSQNSPLLD (148 aa)) is disordered. Low complexity-rich tracts occupy residues 1471–1527 (FDSP…NKNN) and 1534–1556 (SSSN…GRSS). Positions 1563–1572 (NNKKNRRKNS) are enriched in basic residues. Positions 1573 to 1584 (LRTPILNSLLSP) are enriched in polar residues.

This sequence belongs to the G-protein coupled receptor 3 family. GABA-B receptor subfamily.

It localises to the membrane. The chain is Metabotropic glutamate receptor-like protein R (grlR) from Dictyostelium discoideum (Social amoeba).